The primary structure comprises 133 residues: Ribosome-binding factor A (133 aa).

Belongs to the RbfA family. Monomer. Binds 30S ribosomal subunits, but not 50S ribosomal subunits or 70S ribosomes.

The protein localises to the cytoplasm. Functionally, one of several proteins that assist in the late maturation steps of the functional core of the 30S ribosomal subunit. Associates with free 30S ribosomal subunits (but not with 30S subunits that are part of 70S ribosomes or polysomes). Required for efficient processing of 16S rRNA. May interact with the 5'-terminal helix region of 16S rRNA. This chain is Ribosome-binding factor A, found in Salmonella typhimurium (strain LT2 / SGSC1412 / ATCC 700720).